A 363-amino-acid chain; its full sequence is MTKRILMLEDGNYFIGDAIGSEKETIGEVVFNTGMTGYQETITDPSYYGQIITFTYPLVGNYGVNRDDFESINPAVKGVVVREAAEFASNWRNQITLNEFLKEKGIPGIAGIDTRKLTKLIRKEGTLKGILAAETADKEELLHHLRSVRLPVDQVHEVSSAKAFASPGDGKRVVLVDYGVKSSILRELNKRNCYVTVVPYNTSAEEILAMHPDGVMLSNGPGDPKDVPEALEMIRGIQGKLPLFGICLGHQLFALANGADTFKLKFGHRGANHPVKELATGRVDFTAQNHGYAVEKDSLIGTDLKVTHIELNDETVEGLAHKEYPAYTVQYHPEANPGPSDVNYLFDEFMEMMNGKEEGELHA.

A CPSase region spans residues Met-1–Arg-172. Residues Ser-46, Gly-220, and Gly-222 each contribute to the L-glutamine site. Residues Arg-172 to Gly-359 form the Glutamine amidotransferase type-1 domain. The active-site Nucleophile is Cys-247. Residues Leu-248, Gln-251, Asn-289, Gly-291, and Tyr-292 each coordinate L-glutamine. Catalysis depends on residues His-332 and Glu-334.

This sequence belongs to the CarA family. In terms of assembly, composed of two chains; the small (or glutamine) chain promotes the hydrolysis of glutamine to ammonia, which is used by the large (or ammonia) chain to synthesize carbamoyl phosphate. Tetramer of heterodimers (alpha,beta)4.

The catalysed reaction is hydrogencarbonate + L-glutamine + 2 ATP + H2O = carbamoyl phosphate + L-glutamate + 2 ADP + phosphate + 2 H(+). It catalyses the reaction L-glutamine + H2O = L-glutamate + NH4(+). It participates in amino-acid biosynthesis; L-arginine biosynthesis; carbamoyl phosphate from bicarbonate: step 1/1. Its pathway is pyrimidine metabolism; UMP biosynthesis via de novo pathway; (S)-dihydroorotate from bicarbonate: step 1/3. Its function is as follows. Small subunit of the glutamine-dependent carbamoyl phosphate synthetase (CPSase). CPSase catalyzes the formation of carbamoyl phosphate from the ammonia moiety of glutamine, carbonate, and phosphate donated by ATP, constituting the first step of 2 biosynthetic pathways, one leading to arginine and/or urea and the other to pyrimidine nucleotides. The small subunit (glutamine amidotransferase) binds and cleaves glutamine to supply the large subunit with the substrate ammonia. This Listeria monocytogenes serovar 1/2a (strain ATCC BAA-679 / EGD-e) protein is Carbamoyl phosphate synthase small chain.